The primary structure comprises 273 residues: MVLIKEYRVCMPLTVEEYKIGQLYMIARHSLEQSEEGEGVEVVENKPCEDPVHGKGQYTEKHIHLSSRLPYWIQAICPRVFYVIEKSWNYYPYTLTEYTCSFIPKLNVLIKTKYEDNNGSTENCLDLTEDELKVRTVDHLDIAFDEVSAKHYKKEEDPKFFKSEKTNRGPLIEGWRETDKPIMCSYKVVHASFEVWGLQTKVEDFIQRGIREILLLGHRQAFAWVDEWHGMTLEDVRAYERQKQAETNEKIHNTSGGANAAANAKEANDGDID.

The segment at glutamine 244 to aspartate 273 is disordered.

The protein belongs to the PtdIns transfer protein family. PI transfer class IIB subfamily.

Functionally, phosphatidylinositol transfer proteins mediate the monomeric transport of lipids by shielding a lipid from the aqueous environment and binding the lipid in a hydrophobic cavity. This Drosophila melanogaster (Fruit fly) protein is Cytoplasmic phosphatidylinositol transfer protein 1 (rdgBbeta).